A 490-amino-acid polypeptide reads, in one-letter code: Katanin p60 ATPase-containing subunit A-like 1 (490 aa).

Met1 carries the post-translational modification N-acetylmethionine. The tract at residues 95 to 178 (DPAVWPPPVP…MQDGASDGDI (84 aa)) is disordered. A compositionally biased stretch (basic and acidic residues) spans 116–127 (PNREVRPLRKDV). Positions 128–139 (AGVGARGPVGRA) are enriched in low complexity. Residues 143–169 (SKSEKPSTNKDKDYRARGRDDKGRKNM) are compositionally biased toward basic and acidic residues. A Phosphoserine modification is found at Ser174. 248–255 (GPPGTGKT) is a binding site for ATP.

The protein belongs to the AAA ATPase family. Katanin p60 subunit A1 subfamily. A-like 1 sub-subfamily. In terms of assembly, interacts with KATNB1 and KATNBL1.

Its subcellular location is the cytoplasm. The protein resides in the cytoskeleton. The protein localises to the spindle pole. It is found in the spindle. The catalysed reaction is n ATP + n H2O + a microtubule = n ADP + n phosphate + (n+1) alpha/beta tubulin heterodimers.. Functionally, regulates microtubule dynamics in Sertoli cells, a process that is essential for spermiogenesis and male fertility. Severs microtubules in an ATP-dependent manner, promoting rapid reorganization of cellular microtubule arrays. Has microtubule-severing activity in vitro. The chain is Katanin p60 ATPase-containing subunit A-like 1 from Sorex araneus (Eurasian common shrew).